Here is a 202-residue protein sequence, read N- to C-terminus: Small ribosomal subunit protein uS5 (202 aa).

In terms of domain architecture, S5 DRBM spans 50–113 (LKQELLNLNL…REAKLNITPV (64 aa)).

The protein belongs to the universal ribosomal protein uS5 family. In terms of assembly, part of the 30S ribosomal subunit. Contacts protein S4.

Functionally, with S4 and S12 plays an important role in translational accuracy. This Pyrobaculum calidifontis (strain DSM 21063 / JCM 11548 / VA1) protein is Small ribosomal subunit protein uS5.